A 201-amino-acid chain; its full sequence is ATP-dependent Clp protease proteolytic subunit 2 (201 aa).

Ser100 (nucleophile) is an active-site residue. His125 is an active-site residue.

This sequence belongs to the peptidase S14 family. In terms of assembly, fourteen ClpP subunits assemble into 2 heptameric rings which stack back to back to give a disk-like structure with a central cavity, resembling the structure of eukaryotic proteasomes.

The protein localises to the cytoplasm. It catalyses the reaction Hydrolysis of proteins to small peptides in the presence of ATP and magnesium. alpha-casein is the usual test substrate. In the absence of ATP, only oligopeptides shorter than five residues are hydrolyzed (such as succinyl-Leu-Tyr-|-NHMec, and Leu-Tyr-Leu-|-Tyr-Trp, in which cleavage of the -Tyr-|-Leu- and -Tyr-|-Trp bonds also occurs).. Its function is as follows. Cleaves peptides in various proteins in a process that requires ATP hydrolysis. Has a chymotrypsin-like activity. Plays a major role in the degradation of misfolded proteins. This Corynebacterium glutamicum (strain ATCC 13032 / DSM 20300 / JCM 1318 / BCRC 11384 / CCUG 27702 / LMG 3730 / NBRC 12168 / NCIMB 10025 / NRRL B-2784 / 534) protein is ATP-dependent Clp protease proteolytic subunit 2.